Consider the following 90-residue polypeptide: YcgL domain-containing protein YE2368 (90 aa).

The 85-residue stretch at 1–85 folds into the YcgL domain; sequence MLCAIYRSPK…PPESLLKMHL (85 aa).

The chain is YcgL domain-containing protein YE2368 from Yersinia enterocolitica serotype O:8 / biotype 1B (strain NCTC 13174 / 8081).